A 151-amino-acid polypeptide reads, in one-letter code: MRMAPTESTEGRRLWPGPREGGSGKETTSEKLSNLPRPHSYSPKRADAESFRGVPAAFKKCREVFRACWGSRELLFLFKAISEAGPAQNSCGITLEKAGGLEDTGSHWLSWARCKVLYINGFTDPWKDAQAWILIVSCKKGKGTPEREGRN.

Positions 1-48 (MRMAPTESTEGRRLWPGPREGGSGKETTSEKLSNLPRPHSYSPKRADA) are disordered.

This is an uncharacterized protein from Homo sapiens (Human).